A 521-amino-acid polypeptide reads, in one-letter code: Maturase K (521 aa).

It belongs to the intron maturase 2 family. MatK subfamily.

It is found in the plastid. The protein resides in the chloroplast. Its function is as follows. Usually encoded in the trnK tRNA gene intron. Probably assists in splicing its own and other chloroplast group II introns. The chain is Maturase K from Trillium erectum (Beth root).